We begin with the raw amino-acid sequence, 131 residues long: uncharacterized protein (131 aa).

The first 26 residues, 1 to 26 (MKKIVAAIVVIGLVFIAFFYLYSRSG), serve as a signal peptide directing secretion.

This is an uncharacterized protein from Bacillus subtilis (strain 168).